A 119-amino-acid polypeptide reads, in one-letter code: Odin profilin (119 aa).

It belongs to the Asgard profilin family.

Its subcellular location is the cytoplasm. It localises to the cytoskeleton. Inhibition of rabbit actin polymerization is reduced by phosphatidylinositol-(4,5)-P2(1,2-dipalmitoyl), a soluble form of the phospholipid phosphatidylinositol, suggesting an unknown lipid might regulate actin-profilin interaction in vivo. Functionally, binds to actin and affects the structure of the cytoskeleton. At high concentrations inhibits spontaneous rabbit actin nucleation. This strongly suggests this archaea has a profilin-regulated actin system, and actin-type genes can be identified in this organism. The polypeptide is Odin profilin (Odinarchaeota yellowstonii (strain LCB_4)).